The chain runs to 194 residues: Superoxide dismutase [Cu-Zn] (194 aa).

The signal sequence occupies residues 1 to 20; that stretch reads MTRPLALIIFLVAILTNTDP. 2 residues coordinate Cu cation: His85 and His104. Residues Cys96 and Cys188 are joined by a disulfide bond. Residues His104, His112, His121, and Asp124 each coordinate Zn(2+). His162 serves as a coordination point for Cu cation.

The protein belongs to the Cu-Zn superoxide dismutase family. As to quaternary structure, homodimer. Cu cation serves as cofactor. The cofactor is Zn(2+).

The enzyme catalyses 2 superoxide + 2 H(+) = H2O2 + O2. Its function is as follows. Destroys radicals which are normally produced within the cells and which are toxic to biological systems. In Ramazzottius varieornatus (Water bear), this protein is Superoxide dismutase [Cu-Zn].